The sequence spans 2090 residues: Dysferlin (2090 aa).

The C2 1 domain occupies 1-101 (MLRVFILFAE…LATPSLSASF (101 aa)). At 1-2056 (MLRVFILFAE…FILWRRFRCA (2056 aa)) the chain is on the cytoplasmic side. Ca(2+) contacts are provided by D18, I19, D21, and N40. The segment at 130 to 217 (VPLFPPPASL…SAPPRKLLSD (88 aa)) is disordered. Acidic residues predominate over residues 155 to 172 (GGEEDTEDQGLTGDEAEP). Phosphoserine is present on G164. T166 is subject to Phosphothreonine. G167 bears the Phosphoserine mark. A compositionally biased stretch (pro residues) spans 188–199 (PRKPPSHPPPHY). C2 domains are found at residues 206 to 323 (RSSA…RKWL), 362 to 498 (DKED…EEEP), 1146 to 1272 (GVNR…PLTR), 1320 to 1448 (PPPQ…AESP), 1571 to 1689 (PMPP…ARCG), and 1805 to 1953 (GRPG…EKCS). The residue at position 209 (A209) is a Phosphoserine. P219 is subject to Phosphothreonine. Ca(2+) is bound by residues D411, D419, D467, D469, D475, D1178, D1184, D1240, and D1242. The Ca(2+) site is built by D1604, D1610, D1659, D1661, D1924, S1927, and D1930. The segment at 2005 to 2027 (SEHEERPAGQGRDEPNMNPKLED) is disordered. A helical transmembrane segment spans residues 2057-2077 (IILFIILFILLLFLGVFVYAF). At 2078–2090 (PNYAAMKLVKPFR) the chain is on the extracellular side.

This sequence belongs to the ferlin family. As to quaternary structure, interacts with CAV3. Interacts with AHNAK; the interaction is direct and Ca(2+)-independent. Interacts with AHNAK2; the interaction is direct and Ca(2+)-independent. Interacts with ANXA1; the interaction is Ca(2+)- and injury state-dependent. Interacts with ANXA2; the interaction is Ca(2+)- and injury state-dependent. Interacts with CACNA1S and PARVB. Interacts with TRIM72/MG53; interaction is required for transport to sites of cell injury during repair patch formation. Interacts with RIPOR2; this interaction occurs during early myogenic differentiation. Ca(2+) is required as a cofactor. In terms of tissue distribution, expressed in skeletal and cardiac muscles (at protein level). Expressed in skeletal muscle and heart. Also found in brain, liver and kidney.

It is found in the cell membrane. It localises to the sarcolemma. The protein localises to the cytoplasmic vesicle membrane. Its function is as follows. Key calcium ion sensor involved in the Ca(2+)-triggered synaptic vesicle-plasma membrane fusion. Plays a role in the sarcolemma repair mechanism of both skeletal muscle and cardiomyocytes that permits rapid resealing of membranes disrupted by mechanical stress. The polypeptide is Dysferlin (Dysf) (Mus musculus (Mouse)).